The sequence spans 268 residues: Holocytochrome c-type synthase (268 aa).

A compositionally biased stretch (low complexity) spans M1–P22. Positions M1 to C25 are disordered. The N-myristoyl glycine moiety is linked to residue G2. 2 HRM repeats span residues G24–E29 and G34–T39.

It belongs to the cytochrome c-type heme lyase family.

It localises to the mitochondrion inner membrane. Its subcellular location is the membrane. It catalyses the reaction holo-[cytochrome c] = apo-[cytochrome c] + heme b. In terms of biological role, lyase that catalyzes the covalent linking of the heme group to the cytochrome C apoprotein to produce the mature functional cytochrome. The chain is Holocytochrome c-type synthase from Homo sapiens (Human).